A 428-amino-acid polypeptide reads, in one-letter code: Adenylosuccinate synthetase (428 aa).

GTP is bound by residues 12 to 18 (GDEGKGK) and 40 to 42 (GHT). D13 (proton acceptor) is an active-site residue. Mg(2+) contacts are provided by D13 and G40. Residues 13–16 (DEGK), 38–41 (NAGH), T129, R143, Q224, T239, and R303 contribute to the IMP site. H41 functions as the Proton donor in the catalytic mechanism. Substrate is bound at residue 299 to 305 (VTTGRIR). GTP contacts are provided by residues R305, 331–333 (KVD), and 410–412 (AYG).

Belongs to the adenylosuccinate synthetase family. In terms of assembly, homodimer. Mg(2+) is required as a cofactor.

The protein localises to the cytoplasm. It catalyses the reaction IMP + L-aspartate + GTP = N(6)-(1,2-dicarboxyethyl)-AMP + GDP + phosphate + 2 H(+). It participates in purine metabolism; AMP biosynthesis via de novo pathway; AMP from IMP: step 1/2. In terms of biological role, plays an important role in the de novo pathway of purine nucleotide biosynthesis. Catalyzes the first committed step in the biosynthesis of AMP from IMP. In Francisella tularensis subsp. tularensis (strain FSC 198), this protein is Adenylosuccinate synthetase.